The sequence spans 298 residues: HTH-type transcriptional regulator ArgP (298 aa).

The 57-residue stretch at 4–60 (LDYKWIEALDAVVYQGSFERAAEHLFVSQSAISQRIKQLEKFLAQPVLIREQPPKPT) folds into the HTH lysR-type domain. A DNA-binding region (H-T-H motif) is located at residues 21–40 (FERAAEHLFVSQSAISQRIK).

This sequence belongs to the LysR transcriptional regulatory family. As to quaternary structure, homodimer.

In terms of biological role, controls the transcription of genes involved in arginine and lysine metabolism. The sequence is that of HTH-type transcriptional regulator ArgP from Vibrio parahaemolyticus serotype O3:K6 (strain RIMD 2210633).